We begin with the raw amino-acid sequence, 75 residues long: Small ribosomal subunit protein bS16 (75 aa).

Belongs to the bacterial ribosomal protein bS16 family.

The chain is Small ribosomal subunit protein bS16 from Campylobacter jejuni subsp. jejuni serotype O:23/36 (strain 81-176).